The chain runs to 296 residues: ATP synthase gamma chain (296 aa).

Belongs to the ATPase gamma chain family. As to quaternary structure, F-type ATPases have 2 components, CF(1) - the catalytic core - and CF(0) - the membrane proton channel. CF(1) has five subunits: alpha(3), beta(3), gamma(1), delta(1), epsilon(1). CF(0) has three main subunits: a, b and c.

It localises to the cell inner membrane. Produces ATP from ADP in the presence of a proton gradient across the membrane. The gamma chain is believed to be important in regulating ATPase activity and the flow of protons through the CF(0) complex. The protein is ATP synthase gamma chain of Jannaschia sp. (strain CCS1).